The sequence spans 384 residues: Putative odorant receptor 98b (384 aa).

Over 1–34 (MLTDKFLRLQSALFRLLGLELLHEQDVGHRYPWR) the chain is Cytoplasmic. The chain crosses the membrane as a helical span at residues 35–55 (SICCILSVASFMPLTIAFGLQ). Residues 56-66 (NVQNVEQLTDS) lie on the Extracellular side of the membrane. A helical transmembrane segment spans residues 67–87 (LCSVLVDLLALCKIGLFLWLY). Residues 88 to 128 (KDFKFLIGQFYCVLQTETHTAVAEMIVTRESRRDQFISAMY) lie on the Cytoplasmic side of the membrane. The chain crosses the membrane as a helical span at residues 129–149 (AYCFITAGLSACLMSPLSMLI). Residues 150–177 (SYQRTGELQPKFPFPSVYPWDNMKLSNY) lie on the Extracellular side of the membrane. A helical membrane pass occupies residues 178–198 (IISYFWNVCAALGVALPTVCV). Residues 199–258 (DTLFCSLSHNLCALFQIARHKMMHFEGRNTKETHENLKHVFQLYALCLNLGHFLNEYFRP) lie on the Cytoplasmic side of the membrane. A helical membrane pass occupies residues 259–279 (LICQFVAASLHLCVLCYQLSA). Residues 280–284 (NILQP) are Extracellular-facing. Residues 285 to 305 (ALLFYAAFTAAVVGQVSIYCF) traverse the membrane as a helical segment. The Cytoplasmic portion of the chain corresponds to 306–329 (CGSSIHSECQLFGQAIYESSWPHL). The chain crosses the membrane as a helical span at residues 330–350 (LQENLQLVSSLKIAMMRSSLG). The Extracellular portion of the chain corresponds to 351-384 (CPIDGYFFEANRETLITVSKAFIKVSKKTPQVND).

This sequence belongs to the insect chemoreceptor superfamily. Heteromeric odorant receptor channel (TC 1.A.69) family. Or1a subfamily. In terms of assembly, interacts with Orco. Complexes exist early in the endomembrane system in olfactory sensory neurons (OSNs), coupling these complexes to the conserved ciliary trafficking pathway.

The protein resides in the cell membrane. In terms of biological role, odorant receptor which mediates acceptance or avoidance behavior, depending on its substrates. The odorant receptor repertoire encodes a large collection of odor stimuli that vary widely in identity, intensity, and duration. May form a complex with Orco to form odorant-sensing units, providing sensitive and prolonged odorant signaling and calcium permeability. The polypeptide is Putative odorant receptor 98b (Or98b) (Drosophila melanogaster (Fruit fly)).